The sequence spans 231 residues: MAKISKRVAANKAKVERTKFYPIDEALSLVKECASAKFDESIDVAVQLGIDAKKSDQVVRGSVVLPAGTGKSVRVAVFAQGEKAEQAKAAGAEIVGMEDLAEQIKAGNMDFDVVIASPDTMRVVGTLGQILGPRGLMPNPKVGTVTPDVATAVKNAKAGQVQFRVDKAGIIHATIGRRSFEPAALKSNLAALLDALSKAKPASSKGVYLRKIAVSSTMGVGVRIDQATLSA.

This sequence belongs to the universal ribosomal protein uL1 family. Part of the 50S ribosomal subunit.

Binds directly to 23S rRNA. The L1 stalk is quite mobile in the ribosome, and is involved in E site tRNA release. Its function is as follows. Protein L1 is also a translational repressor protein, it controls the translation of the L11 operon by binding to its mRNA. This is Large ribosomal subunit protein uL1 from Ralstonia nicotianae (strain ATCC BAA-1114 / GMI1000) (Ralstonia solanacearum).